Consider the following 139-residue polypeptide: D-ribose pyranase (139 aa).

The active-site Proton donor is the histidine 20. Residues aspartate 28, histidine 106, and tyrosine 128–asparagine 130 each bind substrate.

The protein belongs to the RbsD / FucU family. RbsD subfamily. As to quaternary structure, homodecamer.

Its subcellular location is the cytoplasm. The catalysed reaction is beta-D-ribopyranose = beta-D-ribofuranose. Its pathway is carbohydrate metabolism; D-ribose degradation; D-ribose 5-phosphate from beta-D-ribopyranose: step 1/2. Functionally, catalyzes the interconversion of beta-pyran and beta-furan forms of D-ribose. This Aliivibrio fischeri (strain MJ11) (Vibrio fischeri) protein is D-ribose pyranase.